The chain runs to 333 residues: D-alanine--D-alanine ligase (333 aa).

In terms of domain architecture, ATP-grasp spans 124–329 (KMWFSALGIP…FTEYLYSNIK (206 aa)). Position 154-209 (154-209 (ALETWGSVFIKAASQGSSVGCYRVDSIDELASSLKEAFSYSPYVVVEKTIHARELE)) interacts with ATP. Positions 283, 296, and 298 each coordinate Mg(2+).

It belongs to the D-alanine--D-alanine ligase family. Requires Mg(2+) as cofactor. Mn(2+) serves as cofactor.

The protein localises to the cytoplasm. It catalyses the reaction 2 D-alanine + ATP = D-alanyl-D-alanine + ADP + phosphate + H(+). The protein operates within cell wall biogenesis; peptidoglycan biosynthesis. In terms of biological role, cell wall formation. The chain is D-alanine--D-alanine ligase from Shewanella sediminis (strain HAW-EB3).